The following is a 285-amino-acid chain: Dioxygenase andF (285 aa).

3 residues coordinate Fe cation: histidine 128, aspartate 130, and histidine 205.

The protein belongs to the PhyH family. As to quaternary structure, homodimer. Fe cation serves as cofactor.

It participates in secondary metabolite biosynthesis; terpenoid biosynthesis. Dioxygenase; part of the gene cluster that mediates the biosynthesis of anditomin, a fungal meroterpenoid. The first step of the pathway is the synthesis of 3,5-dimethylorsellinic acid (DMOA) by the polyketide synthase andM. DMOA is then converted to the phthalide compound 5,7-dihydroxy-4,6-dimethylphthalide (DHDMP) by the cytochrome P450 monooxygenase andK, which is further prenylated by the prenyltransferase andD to yield farnesyl-DHDMP. Further epoxidation by the FAD-dependent monooxygenase andE leads to epoxyfarnesyl-DHDMP. The next step involves the terpene cyclase andB that converts epoxyfarnesyl-DHDMP into preandiloid A through opening of the epoxide ring followed by the cyclization of the farnesyl moiety. Preandiloid A is in turn oxidized at the C-3 hydroxyl group to yield preandiloid B by the dehydrogenase andC. The dioxygenase andA is solely responsible for the dehydrogenation of preandiloid B leading to the enone preandiloid C, as well as for the intriguing structural rearrangement to generate the bicyclo[2.2.2]octane core, transforming preandiloid C into andiconin. FAD-binding monooxygenase andJ then produces andilesin D which is reduced by dehydrogenase andI to yield andilesin A. Action of acetyltransferase andG followed by a spontaneous acetate elimination leads then to andilesin B, which is in turn substrate of the short chain dehydrogenase andH to yield andilesin C. Finally, the dioxygenase andF catalyzes the transformation of andilesin C to anditomin. This chain is Dioxygenase andF, found in Emericella variicolor (Aspergillus stellatus).